An 85-amino-acid polypeptide reads, in one-letter code: Putative membrane protein insertion efficiency factor (85 aa).

This sequence belongs to the UPF0161 family.

The protein localises to the cell inner membrane. In terms of biological role, could be involved in insertion of integral membrane proteins into the membrane. In Shewanella woodyi (strain ATCC 51908 / MS32), this protein is Putative membrane protein insertion efficiency factor.